A 174-amino-acid polypeptide reads, in one-letter code: Cathepsin B-like cysteine proteinase 3 (174 aa).

2 disulfide bridges follow: cysteine 22–cysteine 55 and cysteine 30–cysteine 42. Residues histidine 122 and asparagine 142 contribute to the active site.

The protein belongs to the peptidase C1 family.

Functionally, expression of the protease correlates with blood-feeding and suggests a role for the protease in blood digestion. In Ostertagia ostertagi (Brown stomach worm), this protein is Cathepsin B-like cysteine proteinase 3 (CP-3).